The chain runs to 183 residues: Photosystem I assembly protein Ycf4 (183 aa).

A run of 2 helical transmembrane segments spans residues 21–43 (YIWG…SSYL) and 63–85 (LVMC…LILW).

This sequence belongs to the Ycf4 family.

The protein resides in the plastid. It localises to the chloroplast thylakoid membrane. Seems to be required for the assembly of the photosystem I complex. This is Photosystem I assembly protein Ycf4 from Chlorella vulgaris (Green alga).